The sequence spans 559 residues: DPMLQDSQGFNALHLATHSSNAMLVLYLLMAGEMPVDTADTLGHTSLMWAAYQGDSLSVQILLKHGARVDTKDREGFTPLHWAVVKGNRECLSKILMAGADIKAGDKSGKTPVDMIKELKGTMIWDKALSDAKLSSDGQTRRTPFDKLMVLFPWYIALPLAVAQFLFGHIGAIKFLLRTRTPNDMLQTPYYTAVFQSTAFWVGFVWLRYLLGNTSHLLWMNIAFFVGYTSALYFFYGAVMADPGWTKANSSYESQREAVVQMADRGLLDARHFCVSCIAQRPLRSKHCKFCNRCVAKFDHHCPWIYNCIGAKNHRAFLIFLALFLSSVPIYAYLSFEYLHVLSPSYVPVSSDPCLLGDTLCGYFQYDAFTTTLAFWSLFQMTWPGLLFLVQLYQVGQAKTTNEAMNFQRHSYLGKSMTIRQRILRSLTEIDSEMAGAGHPLQEESINLLEANGTATNDEDEVTLFAQEESKPVGFGDHEGHNHGARRAGGGGMWNLLVGTARRRRQQGEDRDVNPFDFGLWQNCVGFWSDGTQGPMRGVNWYSFYEAEARGGAATSRRM.

ANK repeat units lie at residues 8-38 (QGFNALHLATHSSNAMLVLYLLMAGEMPVDT), 42-71 (LGHTSLMWAAYQGDSLSVQILLKHGARVDT), and 75-104 (EGFTPLHWAVVKGNRECLSKILMAGADIKA). The next 3 membrane-spanning stretches (helical) occupy residues 148 to 168 (LMVLFPWYIALPLAVAQFLFG), 192 to 212 (TAVFQSTAFWVGFVWLRYLLG), and 217 to 237 (LLWMNIAFFVGYTSALYFFYG). Residues 272-322 (HFCVSCIAQRPLRSKHCKFCNRCVAKFDHHCPWIYNCIGAKNHRAFLIFLA) enclose the DHHC domain. Cysteine 302 acts as the S-palmitoyl cysteine intermediate in catalysis. Transmembrane regions (helical) follow at residues 316–336 (AFLIFLALFLSSVPIYAYLSF) and 373–393 (LAFWSLFQMTWPGLLFLVQLY).

It belongs to the DHHC palmitoyltransferase family. AKR/ZDHHC17 subfamily.

It is found in the early endosome membrane. The protein resides in the golgi apparatus membrane. The enzyme catalyses L-cysteinyl-[protein] + hexadecanoyl-CoA = S-hexadecanoyl-L-cysteinyl-[protein] + CoA. Palmitoyltransferase specific for casein kinase 1. The chain is Palmitoyltransferase AKR1 from Mortierella alpina (Oleaginous fungus).